Consider the following 292-residue polypeptide: Transcription factor HFR1 (292 aa).

The segment at 114–153 (KRRIQVLSSDDESEEFTREVPSVTRKGSKRRRRDEKMSNK) is disordered. A basic motif; degenerate region spans residues 134–147 (PSVTRKGSKRRRRD). The bHLH domain maps to 134 to 183 (PSVTRKGSKRRRRDEKMSNKMRKLQQLVPNCHKTDKVSVLDKTIEYMKNL). Positions 139–153 (KGSKRRRRDEKMSNK) are enriched in basic residues. A Nuclear localization signal motif is present at residues 141–148 (SKRRRRDE). Residues 148–183 (EKMSNKMRKLQQLVPNCHKTDKVSVLDKTIEYMKNL) form a helix-loop-helix motif region.

Binds to FHY1 and FHL. Forms PHYA/FHY1/HFR1 complex. Homodimer and heterodimer with PIF3. Do not interact alone with either phytochrome A (phyA) or B (phyB), but REP1/PIF3 complex binds to phyA and phyB, preferentially to the Pfr forms. Forms non-functional heterodimer with PRE6, causing liberation of PIF4 from the transcriptionally inactive complex HFR1-PIF4. Repressed when bound to PRE1, PRE2 and PRE4. Mainly expressed in fruits and flowers and, to a lower extent, in leaves, stems, seedlings and roots.

Its subcellular location is the nucleus. Functionally, atypical bHLH transcription factor that regulates photomorphogenesis through modulation of phytochrome (e.g. PHYA) and cryptochrome signalings. Suppresses the transcriptional regulation activity of PIF4 by forming non-DNA-binding heterodimer. In Arabidopsis thaliana (Mouse-ear cress), this protein is Transcription factor HFR1.